Consider the following 255-residue polypeptide: Cell division protein DivIB (255 aa).

Topologically, residues 1 to 30 (MKNSKVIKLQDRVPKLKNQKKRNKPPVNHR) are cytoplasmic. The chain crosses the membrane as a helical span at residues 31 to 51 (LILYISILFLLVLFLIYFRSP). Over 52–255 (LSNIKKISVF…FKYLDDEKKK (204 aa)) the chain is Extracellular. The POTRA domain maps to 53–121 (SNIKKISVFG…NKIDIHIEEY (69 aa)).

It belongs to the FtsQ/DivIB family. DivIB subfamily.

Its subcellular location is the cell membrane. In terms of biological role, cell division protein that may be involved in stabilizing or promoting the assembly of the division complex. The sequence is that of Cell division protein DivIB from Bacillus cytotoxicus (strain DSM 22905 / CIP 110041 / 391-98 / NVH 391-98).